We begin with the raw amino-acid sequence, 148 residues long: 3-dehydroquinate dehydratase 2 (148 aa).

Tyrosine 24 functions as the Proton acceptor in the catalytic mechanism. Residues asparagine 75, histidine 81, and aspartate 88 each coordinate substrate. The active-site Proton donor is the histidine 101. Substrate contacts are provided by residues 102–103 (LS) and arginine 112.

It belongs to the type-II 3-dehydroquinase family. Homododecamer.

It carries out the reaction 3-dehydroquinate = 3-dehydroshikimate + H2O. It participates in metabolic intermediate biosynthesis; chorismate biosynthesis; chorismate from D-erythrose 4-phosphate and phosphoenolpyruvate: step 3/7. Its function is as follows. Catalyzes a trans-dehydration via an enolate intermediate. This is 3-dehydroquinate dehydratase 2 (aroQ2) from Pseudomonas aeruginosa (strain ATCC 15692 / DSM 22644 / CIP 104116 / JCM 14847 / LMG 12228 / 1C / PRS 101 / PAO1).